The chain runs to 184 residues: Large ribosomal subunit protein uL22 (184 aa).

Belongs to the universal ribosomal protein uL22 family. In terms of assembly, part of the 50S ribosomal subunit.

Its function is as follows. This protein binds specifically to 23S rRNA. It makes multiple contacts with different domains of the 23S rRNA in the assembled 50S subunit and ribosome. In terms of biological role, the globular domain of the protein is located near the polypeptide exit tunnel on the outside of the subunit, while an extended beta-hairpin is found that lines the wall of the exit tunnel in the center of the 70S ribosome. The chain is Large ribosomal subunit protein uL22 from Pyrobaculum calidifontis (strain DSM 21063 / JCM 11548 / VA1).